Reading from the N-terminus, the 145-residue chain is Putative pre-16S rRNA nuclease (145 aa).

It belongs to the YqgF nuclease family.

It localises to the cytoplasm. Functionally, could be a nuclease involved in processing of the 5'-end of pre-16S rRNA. This chain is Putative pre-16S rRNA nuclease, found in Limosilactobacillus fermentum (strain NBRC 3956 / LMG 18251) (Lactobacillus fermentum).